Here is a 176-residue protein sequence, read N- to C-terminus: Large ribosomal subunit protein uL10 (176 aa).

It belongs to the universal ribosomal protein uL10 family. In terms of assembly, part of the ribosomal stalk of the 50S ribosomal subunit. The N-terminus interacts with L11 and the large rRNA to form the base of the stalk. The C-terminus forms an elongated spine to which L12 dimers bind in a sequential fashion forming a multimeric L10(L12)X complex.

In terms of biological role, forms part of the ribosomal stalk, playing a central role in the interaction of the ribosome with GTP-bound translation factors. In Nocardia farcinica (strain IFM 10152), this protein is Large ribosomal subunit protein uL10.